The following is a 533-amino-acid chain: Na(+)/H(+) antiporter NhaB (533 aa).

11 consecutive transmembrane segments (helical) span residues 10-30 (IGNF…SFLI), 67-87 (PGGL…SQVL), 98-118 (LLLV…LFVF), 131-165 (VSLL…FYSI), 209-229 (LLMH…VGEP), 247-267 (IRMS…CFIV), 310-330 (AFVG…VGLI), 355-375 (EEAL…AVII), 396-416 (LVIF…VFVG), 454-474 (ATPN…APLI), and 481-501 (MVWM…MAIQ).

This sequence belongs to the NhaB Na(+)/H(+) (TC 2.A.34) antiporter family.

The protein resides in the cell inner membrane. It catalyses the reaction 2 Na(+)(in) + 3 H(+)(out) = 2 Na(+)(out) + 3 H(+)(in). In terms of biological role, na(+)/H(+) antiporter that extrudes sodium in exchange for external protons. The sequence is that of Na(+)/H(+) antiporter NhaB from Shewanella sp. (strain ANA-3).